The following is a 466-amino-acid chain: Asparagine--tRNA ligase (466 aa).

This sequence belongs to the class-II aminoacyl-tRNA synthetase family. In terms of assembly, homodimer.

The protein resides in the cytoplasm. It carries out the reaction tRNA(Asn) + L-asparagine + ATP = L-asparaginyl-tRNA(Asn) + AMP + diphosphate + H(+). The polypeptide is Asparagine--tRNA ligase (Sodalis glossinidius (strain morsitans)).